Here is a 727-residue protein sequence, read N- to C-terminus: METYEHVGNLQVATKLITFIEQRALPGTGIKKDDFWSGVQQIITELMPENKMLLAKREEIQATIDAWHQKNKGPIDFSAYHSFLEEIGYLEPIPEHVTITTENVDDEIAAQAGPQLVVPVNNARYAINAANARWGSLYDALYGSNVISEEDGCEKTGTYNPKRGTKVIQFAKDFLDHTFPLTSGSHHEAINYAIMDKQLVVTLESGKMTRLKDETQFVGYQGSQGDPSVILLLHHGLHVEIQIDARHPIGKSDRAKVKDIVLESALTTIMDCEDSVAAVDAEDKVAVYQNWLGLMKGTLEATFTKEGKTKKRKLNEDRSYTAPNGETFSLPGRSLMFVRNVGHLMTTPVIRTQSGEEVPEGILDGIVTSLIAKHDLLQNGTFRNSKKGSVYIVKPKMHGSEEVAFANRLFNRIEDILGLERHTLKIGVMDEERRTSLNLKACIEKVKERVVFINTGFLDRTGDEIHTSMEAGPMIRKGDMKSSSWLSAYERSNVAAGLTCGFQGRAQIGKGMWAMPDLMNEMMEQKGTQLEAGANTAWVPSPTAATLHAIHYHRHHVPAIQKTLADDQTCYRKEILEIPLAGSTDWTNEDIQAELNNNAQGILGYVVRWVEQGIGCSKVPDIHNTALMEDRATLRISSQHMANWLRHGIVSKEQVIRTMERMAKVVDEQNAGDPAYRPMADNLEQSVAFQAALELVLKGTEQPSGYTEPILHRRRLEFKQKIAKELV.

Acetyl-CoA contacts are provided by residues valine 117, arginine 124–tyrosine 125, serine 275, and arginine 312. Residue arginine 339 is the Proton acceptor of the active site. Residues arginine 339, glutamate 431, and glycine 456–aspartate 459 each bind glyoxylate. Residues glutamate 431 and aspartate 459 each coordinate Mg(2+). Proline 540 is an acetyl-CoA binding site. Cysteine 616 is modified (cysteine sulfenic acid (-SOH)). The Proton donor role is filled by aspartate 630.

This sequence belongs to the malate synthase family. GlcB subfamily. Monomer. Requires Mg(2+) as cofactor.

The protein localises to the cytoplasm. The catalysed reaction is glyoxylate + acetyl-CoA + H2O = (S)-malate + CoA + H(+). It participates in carbohydrate metabolism; glyoxylate cycle; (S)-malate from isocitrate: step 2/2. Involved in the glycolate utilization. Catalyzes the condensation and subsequent hydrolysis of acetyl-coenzyme A (acetyl-CoA) and glyoxylate to form malate and CoA. This chain is Malate synthase G, found in Halalkalibacterium halodurans (strain ATCC BAA-125 / DSM 18197 / FERM 7344 / JCM 9153 / C-125) (Bacillus halodurans).